Here is a 496-residue protein sequence, read N- to C-terminus: UDP-glycosyltransferase 84A2 (496 aa).

His-23 functions as the Proton acceptor in the catalytic mechanism. His-23 lines the an anthocyanidin pocket. Positions 352, 367, 370, 371, 372, and 375 each coordinate UDP-alpha-D-glucose. An an anthocyanidin-binding site is contributed by Gly-390. 2 residues coordinate UDP-alpha-D-glucose: Asp-391 and Gln-392.

Belongs to the UDP-glycosyltransferase family. In terms of tissue distribution, expressed in roots, cotyledons, leaf veins and trichomes.

It catalyses the reaction (E)-sinapate + UDP-alpha-D-glucose = 1-O-(trans-sinapoyl)-beta-D-glucose + UDP. In terms of biological role, sinapate glucosyltransferase (SGT) required for the biosynthesis of the glucose ester sinapoylglucose and subsequently sinapoylmalate and sinapoylcholine. Is the major SGT activity in plant. Plays an important role in sinapoylation of anthocyanins. Sinapoylglucose produced by UGT84A2 is a significant source of sinapoyl moieties for anthocyanins. Indole-3-butyric acid (IBA)-specific glucosyltransferase that catalyzes the glucosylation of the auxin IBA, but not indole-3-acetic acid (IAA). May be involved in flowering regulation through IBA-mediated transcriptional repression of the auxin-response factors ARF6 and ARF8 and downstream flowering pathway genes. Can glucosylate the phytotoxic xenobiotic compound 2,4,5-trichlorophenol (TCP). The chain is UDP-glycosyltransferase 84A2 from Arabidopsis thaliana (Mouse-ear cress).